We begin with the raw amino-acid sequence, 136 residues long: MRTPGPLPVLLLLLAGAPAARPTPPTCYSRMRALSQEITRDFNLLQVSEPSEPCVRYLPRLYLDIHNYCVLDKLRDFVASPPCWKVAQVDSLKDKARKLYTIMNSFCRRDLVFLLDDCNALEYPIPVTTVLPDRQR.

Positions 1 to 22 (MRTPGPLPVLLLLLAGAPAARP) are cleaved as a signal peptide.

As to expression, specifically expressed in CD34+ hematopoietic cells.

Its subcellular location is the secreted. In Homo sapiens (Human), this protein is Cytokine-like protein 1 (CYTL1).